A 240-amino-acid chain; its full sequence is NKG2-E type II integral membrane protein (240 aa).

Over residues 1–12 the composition is skewed to polar residues; it reads MSKQRGTFSEVS. Residues 1 to 31 are disordered; sequence MSKQRGTFSEVSLAQDPKWQQRKPKGNKSSI. The Cytoplasmic portion of the chain corresponds to 1–70; that stretch reads MSKQRGTFSE…CQGLLPPPEK (70 aa). The helical; Signal-anchor for type II membrane protein transmembrane segment at 71–93 threads the bilayer; the sequence is LTAEVLGIICIVLMATVLKTIVL. The Extracellular segment spans residues 94–240; that stretch reads IPFLEQNNSS…IMLTRLVLNS (147 aa). A glycan (N-linked (GlcNAc...) asparagine) is linked at Asn-100. The C-type lectin domain occupies 116 to 230; the sequence is HCPEEWITYS…GSSRIIRRGF (115 aa). Residues Cys-117 and Cys-128 are joined by a disulfide bond. Residues Asn-149 and Asn-179 are each glycosylated (N-linked (GlcNAc...) asparagine). Cys-207 and Cys-220 are disulfide-bonded.

In terms of assembly, can form disulfide-bonded heterodimer with CD94. As to expression, natural killer cells.

Its subcellular location is the membrane. Functionally, plays a role as a receptor for the recognition of MHC class I HLA-E molecules by NK cells and some cytotoxic T-cells. In Homo sapiens (Human), this protein is NKG2-E type II integral membrane protein (KLRC3).